We begin with the raw amino-acid sequence, 749 residues long: Fibronectin type III and SPRY domain-containing protein 2 (749 aa).

The stretch at 205–317 forms a coiled coil; the sequence is LNEALESAKD…TIEEMCHEEK (113 aa). 2 Fibronectin type-III domains span residues 375-470 and 471-564; these read PVIN…TAPS and PPII…TIGS. The region spanning 546 to 744 is the B30.2/SPRY domain; that stretch reads NMGGPSVRSE…KVHNGISMPK (199 aa).

As to quaternary structure, interacts with CMYA5. In cardiac muscles, identified in a complex composed of FSD2, CMYA5 and RYR2.

The protein resides in the nucleus. Its subcellular location is the sarcoplasmic reticulum. It is found in the cytoplasm. It localises to the perinuclear region. The sequence is that of Fibronectin type III and SPRY domain-containing protein 2 (FSD2) from Homo sapiens (Human).